The primary structure comprises 372 residues: Ligninase LG3 (372 aa).

The first 21 residues, 1–21, serve as a signal peptide directing secretion; it reads MAFKQLFAAISLALSLSAANA. Positions 22–28 are excised as a propeptide; the sequence is AAVIEKR. 2 disulfides stabilise this stretch: C31-C43 and C62-C148. The active-site Proton acceptor is the H75. Residues D76, G94, D96, and S98 each coordinate Ca(2+). A heme b-binding site is contributed by H204. Ca(2+)-binding residues include S205, D222, T224, I227, and D229. C277 and C345 are joined by a disulfide. N285 is a glycosylation site (N-linked (GlcNAc...) asparagine). Positions 350–361 are enriched in low complexity; it reads FPTLTTLPGPET. Positions 350-372 are disordered; sequence FPTLTTLPGPETSVQRIPPPPGA.

It belongs to the peroxidase family. Ligninase subfamily. Heme b is required as a cofactor. Ca(2+) serves as cofactor.

The catalysed reaction is 1-(3,4-dimethoxyphenyl)-2-(2-methoxyphenoxy)propane-1,3-diol + H2O2 = 3,4-dimethoxybenzaldehyde + guaiacol + glycolaldehyde + H2O. The enzyme catalyses 2 (3,4-dimethoxyphenyl)methanol + H2O2 = 2 (3,4-dimethoxyphenyl)methanol radical + 2 H2O. The protein operates within secondary metabolite metabolism; lignin degradation. Depolymerization of lignin. Catalyzes the C(alpha)-C(beta) cleavage of the propyl side chains of lignin. This is Ligninase LG3 (GLG3) from Phanerodontia chrysosporium (White-rot fungus).